The following is a 387-amino-acid chain: Succinate--CoA ligase [ADP-forming] subunit beta (387 aa).

The 228-residue stretch at 9 to 236 (KELFAKHNVP…RDATDPLELK (228 aa)) folds into the ATP-grasp domain. ATP-binding positions include lysine 45, 52-54 (GRG), serine 94, and glutamate 99. Residues asparagine 191 and aspartate 205 each contribute to the Mg(2+) site. Residues asparagine 256 and 318–320 (GIT) contribute to the substrate site.

Belongs to the succinate/malate CoA ligase beta subunit family. Heterotetramer of two alpha and two beta subunits. It depends on Mg(2+) as a cofactor.

It catalyses the reaction succinate + ATP + CoA = succinyl-CoA + ADP + phosphate. It carries out the reaction GTP + succinate + CoA = succinyl-CoA + GDP + phosphate. It functions in the pathway carbohydrate metabolism; tricarboxylic acid cycle; succinate from succinyl-CoA (ligase route): step 1/1. Functionally, succinyl-CoA synthetase functions in the citric acid cycle (TCA), coupling the hydrolysis of succinyl-CoA to the synthesis of either ATP or GTP and thus represents the only step of substrate-level phosphorylation in the TCA. The beta subunit provides nucleotide specificity of the enzyme and binds the substrate succinate, while the binding sites for coenzyme A and phosphate are found in the alpha subunit. The chain is Succinate--CoA ligase [ADP-forming] subunit beta from Mycolicibacterium smegmatis (strain ATCC 700084 / mc(2)155) (Mycobacterium smegmatis).